The primary structure comprises 131 residues: ATP synthase epsilon chain (131 aa).

This sequence belongs to the ATPase epsilon chain family. As to quaternary structure, F-type ATPases have 2 components, CF(1) - the catalytic core - and CF(0) - the membrane proton channel. CF(1) has five subunits: alpha(3), beta(3), gamma(1), delta(1), epsilon(1). CF(0) has three main subunits: a, b and c.

The protein localises to the cell inner membrane. Produces ATP from ADP in the presence of a proton gradient across the membrane. This is ATP synthase epsilon chain from Helicobacter hepaticus (strain ATCC 51449 / 3B1).